Here is a 449-residue protein sequence, read N- to C-terminus: Tubulin alpha-8 chain (449 aa).

Residues 1 to 4 (MREC) carry the MREC motif motif. GTP is bound by residues Gln-11, Glu-71, Ser-140, Gly-144, Thr-145, Thr-179, Asn-206, and Asn-228. Position 71 (Glu-71) interacts with Mg(2+). Residue Glu-254 is part of the active site.

Belongs to the tubulin family. As to quaternary structure, dimer of alpha and beta chains. A typical microtubule is a hollow water-filled tube with an outer diameter of 25 nm and an inner diameter of 15 nM. Alpha-beta heterodimers associate head-to-tail to form protofilaments running lengthwise along the microtubule wall with the beta-tubulin subunit facing the microtubule plus end conferring a structural polarity. Microtubules usually have 13 protofilaments but different protofilament numbers can be found in some organisms and specialized cells. Mg(2+) serves as cofactor. Some glutamate residues at the C-terminus are polyglycylated, resulting in polyglycine chains on the gamma-carboxyl group. Glycylation is mainly limited to tubulin incorporated into axonemes (cilia and flagella) whereas glutamylation is prevalent in neuronal cells, centrioles, axonemes, and the mitotic spindle. Both modifications can coexist on the same protein on adjacent residues, and lowering polyglycylation levels increases polyglutamylation, and reciprocally. Cilia and flagella glycylation is required for their stability and maintenance. Flagella glycylation controls sperm motility. Post-translationally, some glutamate residues at the C-terminus are polyglutamylated, resulting in polyglutamate chains on the gamma-carboxyl group. Polyglutamylation plays a key role in microtubule severing by spastin (SPAST). SPAST preferentially recognizes and acts on microtubules decorated with short polyglutamate tails: severing activity by SPAST increases as the number of glutamates per tubulin rises from one to eight, but decreases beyond this glutamylation threshold. Glutamylation is also involved in cilia motility. In terms of processing, the C-terminal phenylalanine residue is cleaved by MATCAP1/KIAA0895L. As to expression, expressed at highest levels in the testis, followed by skeletal and heart muscle. Expressed at low levels in the developing brain.

The protein localises to the cytoplasm. The protein resides in the cytoskeleton. It catalyses the reaction GTP + H2O = GDP + phosphate + H(+). In terms of biological role, tubulin is the major constituent of microtubules, a cylinder consisting of laterally associated linear protofilaments composed of alpha- and beta-tubulin heterodimers. Microtubules grow by the addition of GTP-tubulin dimers to the microtubule end, where a stabilizing cap forms. Below the cap, tubulin dimers are in GDP-bound state, owing to GTPase activity of alpha-tubulin. This is Tubulin alpha-8 chain (Tuba8) from Mus musculus (Mouse).